The primary structure comprises 156 residues: Small ribosomal subunit protein uS7 (156 aa).

The protein belongs to the universal ribosomal protein uS7 family. Part of the 30S ribosomal subunit. Contacts proteins S9 and S11.

Functionally, one of the primary rRNA binding proteins, it binds directly to 16S rRNA where it nucleates assembly of the head domain of the 30S subunit. Is located at the subunit interface close to the decoding center, probably blocks exit of the E-site tRNA. The sequence is that of Small ribosomal subunit protein uS7 from Acinetobacter baylyi (strain ATCC 33305 / BD413 / ADP1).